Reading from the N-terminus, the 203-residue chain is Putative B3 domain-containing protein At1g50220 (203 aa).

A DNA-binding region (TF-B3) is located at residues 99 to 195 (DIVGNVALPK…KFIVLNFQHK (97 aa)).

Its subcellular location is the nucleus. This is Putative B3 domain-containing protein At1g50220 from Arabidopsis thaliana (Mouse-ear cress).